The chain runs to 199 residues: NAD(P)H dehydrogenase (quinone) (199 aa).

The region spanning 4-190 is the Flavodoxin-like domain; sequence ILVLYYSTYG…DGARFQGRHV (187 aa). Residues 10–15 and 78–80 contribute to the FMN site; these read STYGHI and TRF. Residue Tyr-12 coordinates NAD(+). Trp-98 is a binding site for substrate. FMN-binding positions include 113–119 and His-134; that span reads STATQHG.

The protein belongs to the WrbA family. It depends on FMN as a cofactor.

It catalyses the reaction a quinone + NADH + H(+) = a quinol + NAD(+). The enzyme catalyses a quinone + NADPH + H(+) = a quinol + NADP(+). The protein is NAD(P)H dehydrogenase (quinone) of Rhizorhabdus wittichii (strain DSM 6014 / CCUG 31198 / JCM 15750 / NBRC 105917 / EY 4224 / RW1) (Sphingomonas wittichii).